The following is a 254-amino-acid chain: O-antigen biosynthesis glycosyltransferase WbnJ (254 aa).

The protein belongs to the glycosyltransferase 2 family.

It catalyses the reaction an N-acetyl-alpha-D-galactosaminyl derivative + UDP-alpha-D-galactose = a beta-D-galactosyl-(1-&gt;3)-N-acetyl-alpha-D-galactosaminyl derivative + UDP + H(+). The catalysed reaction is alpha-D-GalNAc-(1-&gt;3)-alpha-D-GalNAc-di-trans,octa-cis-undecaprenyl diphosphate + UDP-alpha-D-galactose = beta-D-Gal-(1-&gt;3)-alpha-D-GalNAc-(1-&gt;3)-alpha-D-GalNAc-di-trans,octa-cis-undecaprenyl diphosphate + UDP + H(+). Its pathway is bacterial outer membrane biogenesis; LPS O-antigen biosynthesis. Its function is as follows. Involved in the assembly of the O-repeating unit during O-antigen biosynthesis. In Escherichia coli, this protein is O-antigen biosynthesis glycosyltransferase WbnJ.